Here is an 883-residue protein sequence, read N- to C-terminus: Glutamate receptor 2 (883 aa).

Residues 1-21 (MQKIMHISVLLSPVLWGLIFG) form the signal peptide. Over 22–543 (VSSNSIQIGG…GVFSFLDPLA (522 aa)) the chain is Extracellular. Cys-78 and Cys-330 are disulfide-bonded. N-linked (GlcNAc...) asparagine glycans are attached at residues Asn-256, Asn-370, Asn-406, and Asn-413. 3 residues coordinate L-glutamate: Pro-499, Thr-501, and Arg-506. The helical transmembrane segment at 544-564 (YEIWMCIVFAYIGVSVVLFLV) threads the bilayer. Over 565 to 591 (SRFSPYEWHTEEFEDGRETQSSESTNE) the chain is Cytoplasmic. Residues 592–607 (FGIFNSLWFSLGAFMQ) constitute an intramembrane region (helical; Pore-forming). The stretch at 608–610 (QGC) is an intramembrane region. The S-palmitoyl cysteine moiety is linked to residue Cys-610. Over 611–616 (DISPRS) the chain is Cytoplasmic. Residues 617-637 (LSGRIVGGVWWFFTLIIISSY) traverse the membrane as a helical segment. At 638–812 (TANLAAFLTV…EKTSALSLSN (175 aa)) the chain is on the extracellular side. Residues Ser-675 and Thr-676 each contribute to the L-glutamate site. Phosphoserine; by PKC is present on Ser-683. Ser-717 carries the post-translational modification Phosphoserine; by PKG. Glu-726 is a binding site for L-glutamate. A disulfide bridge connects residues Cys-739 and Cys-794. Residues 813 to 833 (VAGVFYILVGGLGLAMLVALI) form a helical membrane-spanning segment. Residues 834-883 (EFCYKSRAEAKRMKVAKNPQNINPSSSQNSQNFATYKEGYNVYGIESVKI) are Cytoplasmic-facing. Residue Cys-836 is the site of S-palmitoyl cysteine attachment. A phosphoserine mark is found at Ser-860 and Ser-863. A required for interaction with IQSEC1 region spans residues 867–877 (ATYKEGYNVYG). Tyr-876 carries the post-translational modification Phosphotyrosine. Ser-880 is subject to Phosphoserine.

The protein belongs to the glutamate-gated ion channel (TC 1.A.10.1) family. GRIA2 subfamily. In terms of assembly, homotetramer or heterotetramer of pore-forming glutamate receptor subunits. Tetramers may be formed by the dimerization of dimers. May interact with MPP4. Forms a ternary complex with GRIP1 and CSPG4. Interacts with ATAD1 in an ATP-dependent manner. ATAD1-catalyzed ATP hydrolysis disrupts binding to ATAD1 and to GRIP1 and leads to AMPAR complex disassembly. Interacts with GRIP2. Interacts with GRIP1. Interacts with NSF via its C-terminus. Interacts with CACNG2, PICK1 and GRIP2. Interacts with GRIA1 and SYNDIG1. Part of a complex containing GRIA2, NSF and NAPA and/or NAPB. Interacts with SNX27 (via PDZ domain); the interaction is required for recycling to the plasma membrane when endocytosed and prevent degradation in lysosomes. Interacts with LRFN1. Found in a complex with GRIA1, GRIA3, GRIA4, CNIH2, CNIH3, CACNG2, CACNG3, CACNG4, CACNG5, CACNG7 and CACNG8. Interacts with CACNG5. Interacts with OLFM2. Interacts with AP4B1, AP4E1 and AP4M1; probably indirect it mediates the somatodendritic localization of GRIA2 in neurons. Forms a complex with GRIP1, NSG1 and STX12; controls the intracellular fate of AMPAR and the endosomal sorting of the GRIA2 subunit toward recycling and membrane targeting. Interacts with IQSEC1; the interaction is required for ARF6 activation. Interacts (heterotetramer form) with CNIH2 and CNIH3; this interaction promotes expression at the plasma membrane and extensively modulates their gating properties by slowing deactivation and desensitization kinetics. Post-translationally, palmitoylated. Depalmitoylated upon L-glutamate stimulation. Cys-610 palmitoylation leads to Golgi retention and decreased cell surface expression. In contrast, Cys-836 palmitoylation does not affect cell surface expression but regulates stimulation-dependent endocytosis. In terms of processing, phosphorylation at Tyr-876 is required for interaction with IQSEC1 and ARF6 activation, which in turn triggers AMPAR internalization for persistent synaptic depression. Ubiquitinated by RNF167, leading to its degradation. Post-translationally, N-glycosylated. Detected in forebrain. Detected in dendrites of neuronal cells. Expressed in the pyramidal cell layers of CA1 and CA3 and in the granule cell layer of the dentate gyrus.

It is found in the cell membrane. The protein resides in the postsynaptic cell membrane. Its subcellular location is the postsynaptic density membrane. It catalyses the reaction Ca(2+)(in) = Ca(2+)(out). The catalysed reaction is Na(+)(in) = Na(+)(out). Ionotropic glutamate receptor that functions as a ligand-gated cation channel, gated by L-glutamate and glutamatergic agonists such as alpha-amino-3-hydroxy-5-methyl-4-isoxazolepropionic acid (AMPA), quisqualic acid, and kainic acid. L-glutamate acts as an excitatory neurotransmitter at many synapses in the central nervous system and plays an important role in fast excitatory synaptic transmission. Binding of the excitatory neurotransmitter L-glutamate induces a conformation change, leading to the opening of the cation channel, and thereby converts the chemical signal to an electrical impulse upon entry of monovalent and divalent cations such as sodium and calcium. The receptor then desensitizes rapidly and enters in a transient inactive state, characterized by the presence of bound agonist. In the presence of CACNG4 or CACNG7 or CACNG8, shows resensitization which is characterized by a delayed accumulation of current flux upon continued application of L-glutamate. Through complex formation with NSG1, GRIP1 and STX12 controls the intracellular fate of AMPAR and the endosomal sorting of the GRIA2 subunit toward recycling and membrane targeting. The protein is Glutamate receptor 2 of Rattus norvegicus (Rat).